Reading from the N-terminus, the 391-residue chain is NADH-quinone oxidoreductase subunit D (391 aa).

The protein belongs to the complex I 49 kDa subunit family. NDH-1 is composed of 14 different subunits. Subunits NuoB, C, D, E, F, and G constitute the peripheral sector of the complex.

The protein resides in the cell inner membrane. It carries out the reaction a quinone + NADH + 5 H(+)(in) = a quinol + NAD(+) + 4 H(+)(out). In terms of biological role, NDH-1 shuttles electrons from NADH, via FMN and iron-sulfur (Fe-S) centers, to quinones in the respiratory chain. The immediate electron acceptor for the enzyme in this species is believed to be ubiquinone. Couples the redox reaction to proton translocation (for every two electrons transferred, four hydrogen ions are translocated across the cytoplasmic membrane), and thus conserves the redox energy in a proton gradient. The sequence is that of NADH-quinone oxidoreductase subunit D from Rickettsia rickettsii (strain Iowa).